The chain runs to 148 residues: 3-dehydroquinate dehydratase (148 aa).

Residue Tyr-23 is the Proton acceptor of the active site. Asn-74, His-80, and Asp-87 together coordinate substrate. Catalysis depends on His-100, which acts as the Proton donor. Residues Ile-101–Ser-102 and Arg-111 each bind substrate.

Belongs to the type-II 3-dehydroquinase family. In terms of assembly, homododecamer.

The enzyme catalyses 3-dehydroquinate = 3-dehydroshikimate + H2O. It functions in the pathway metabolic intermediate biosynthesis; chorismate biosynthesis; chorismate from D-erythrose 4-phosphate and phosphoenolpyruvate: step 3/7. Functionally, catalyzes a trans-dehydration via an enolate intermediate. The polypeptide is 3-dehydroquinate dehydratase (Caldanaerobacter subterraneus subsp. tengcongensis (strain DSM 15242 / JCM 11007 / NBRC 100824 / MB4) (Thermoanaerobacter tengcongensis)).